A 302-amino-acid polypeptide reads, in one-letter code: uncharacterized protein (302 aa).

The next 9 helical transmembrane spans lie at 10–30, 65–85, 102–122, 130–150, 162–182, 190–210, 224–244, 251–271, and 282–302; these read VLSVLVLVLLGYILKVLGVLG, LVLIPVICMITGTLSGTIAYL, VAAAMMNSGFLGYPVTAGIFG, IFYDTGTTLMFTSLGLLLSHI, AVFFPPLWAFLLGVIFNLWGL, ILGYLSGAAVPLIMISLGLTL, LVSGLRLLISPLMAAGISYVL, FSVTVLEASMPSAMLAAVLAI, and SCIFMSTILSLVSLPLWSVVL.

This sequence belongs to the auxin efflux carrier (TC 2.A.69) family.

The protein localises to the cell membrane. This is an uncharacterized protein from Methanothermobacter thermautotrophicus (strain ATCC 29096 / DSM 1053 / JCM 10044 / NBRC 100330 / Delta H) (Methanobacterium thermoautotrophicum).